The sequence spans 878 residues: MNEQYSAMRSNVSMLGTLLGDTIKEALGEHILDRVETIRKLSKSSRAGNEASRQELLTTLQNLSNDELLPVARAFSQFLNLTNTAEQYHSISPHGEAASNPEALAQLFTRLKDKKLSDQDMRSAVDDLSIELVLTAHPTEITRRTLIHKLVEVNTCLSQLDHNDLADYERNKIMRRLRQLVAQSWHTDEIRKLRPSPVDEAKWGFAVVENSLWEGVPAFLREFNEQLENSLDYRLPVEAVPIRFTSWMGGDRDGNPNVTAEITRHVLLLSRWKATDLFLRDIQVLVSELSMSECTPELRELAGGEEVLEPYRQLMKNVRTQLTNTQAYLEARLKGERVLPPHDLLVSNDQLWEPLYACYQSLKACGMEIIANGQLLDTLRRVRCFGVPLVRIDVRQESTRHTDAIAELTRYLGLGDYESWSESDKQAFLVRELNSKRPLVPLKWEPSAETQEVLETCRVIAEAPQGSIAAYVISMAKVPSDVLAVHLLLKEAGCPFTLPVAPLFETLDDLNNADDVMTQLLGIDWYRGLIQGKQMVMIGYSDSAKDAGVMAASWAQYRAQDALIKTCEKAGITLTLFHGRGGSIGRGGAPAHAALLSQPPGSLKGGLRVTEQGEMIRFKFGLPEVTISSLALYAGAILEANLLPPPEPKKEWIEVMDLLSDASCDMYRSYVRENPEFVRYFRAATPELELGKLPLGSRPAKRRPDGGVESLRAIPWIFAWTQNRLMLPAWLGAGAGLQRAIDAGKRDVLATMCRDWPFFSTRIGMLEMVFAKADLWLAEYYDQRLVDKSLWPLGQQLRDQLAADIKVVLAIANDDHLMADLPWIAESIALRNVYTDPLNVLQAELLHRSRQQEHPDACVEQALMVTIAGVAAGMRNTG.

Catalysis depends on residues H137 and K545.

Belongs to the PEPCase type 1 family. The cofactor is Mg(2+).

It carries out the reaction oxaloacetate + phosphate = phosphoenolpyruvate + hydrogencarbonate. Forms oxaloacetate, a four-carbon dicarboxylic acid source for the tricarboxylic acid cycle. This is Phosphoenolpyruvate carboxylase from Yersinia pseudotuberculosis serotype O:1b (strain IP 31758).